Here is a 1035-residue protein sequence, read N- to C-terminus: Translation initiation factor IF-2 (1035 aa).

The span at 56-66 shows a compositional bias: basic and acidic residues; sequence KDDKSNTDDNK. Disordered regions lie at residues 56 to 80 and 114 to 402; these read KDDK…SSEA and ANDA…VIKN. Over residues 68–78 the composition is skewed to polar residues; sequence ASAHSVAQHSS. Basic and acidic residues-rich tracts occupy residues 114–137 and 146–200; these read ANDA…RVET and LVRE…EIKD. Polar residues predominate over residues 219–228; that stretch reads DSATNVNLNE. Positions 229 to 238 are enriched in basic and acidic residues; that stretch reads SIDKDKKTND. Residues 239 to 253 are compositionally biased toward polar residues; sequence NRQVSTDNSAVNNEE. The segment covering 259 to 315 has biased composition (basic and acidic residues); it reads LNKKDMDKKNNNKKNEAKKNAEKKNEAKKNEKNDNKGGNAKKNEHRSPDMKKNDSNR. The segment covering 316 to 325 has biased composition (polar residues); the sequence is PQDANKQNSK. Composition is skewed to basic and acidic residues over residues 327–347 and 354–385; these read AADK…EIPK and QKEE…KEQP. The tr-type G domain occupies 537 to 706; the sequence is PRPPVVVVMG…LLAADMLELK (170 aa). The G1 stretch occupies residues 546-553; sequence GHVDHGKT. 546 to 553 is a binding site for GTP; it reads GHVDHGKT. The tract at residues 571–575 is G2; that stretch reads GITQH. Positions 592–595 are G3; the sequence is DTPG. GTP contacts are provided by residues 592-596 and 646-649; these read DTPGH and NKID. The tract at residues 646–649 is G4; the sequence is NKID. Residues 682 to 684 are G5; sequence SAK.

It belongs to the TRAFAC class translation factor GTPase superfamily. Classic translation factor GTPase family. IF-2 subfamily.

Its subcellular location is the cytoplasm. Its function is as follows. One of the essential components for the initiation of protein synthesis. Protects formylmethionyl-tRNA from spontaneous hydrolysis and promotes its binding to the 30S ribosomal subunits. Also involved in the hydrolysis of GTP during the formation of the 70S ribosomal complex. The chain is Translation initiation factor IF-2 from Acetivibrio thermocellus (strain ATCC 27405 / DSM 1237 / JCM 9322 / NBRC 103400 / NCIMB 10682 / NRRL B-4536 / VPI 7372) (Clostridium thermocellum).